Reading from the N-terminus, the 666-residue chain is DNA ligase (666 aa).

NAD(+) is bound by residues 34–38, 83–84, and glutamate 114; these read DEEYD and SL. Residue lysine 116 is the N6-AMP-lysine intermediate of the active site. Residues arginine 137, glutamate 174, lysine 290, and lysine 314 each contribute to the NAD(+) site. Zn(2+)-binding residues include cysteine 408, cysteine 411, cysteine 424, and cysteine 429. The BRCT domain occupies 584 to 666; the sequence is SIEGPLKGLT…LKMVKREHNG (83 aa).

This sequence belongs to the NAD-dependent DNA ligase family. LigA subfamily. Mg(2+) serves as cofactor. It depends on Mn(2+) as a cofactor.

It carries out the reaction NAD(+) + (deoxyribonucleotide)n-3'-hydroxyl + 5'-phospho-(deoxyribonucleotide)m = (deoxyribonucleotide)n+m + AMP + beta-nicotinamide D-nucleotide.. In terms of biological role, DNA ligase that catalyzes the formation of phosphodiester linkages between 5'-phosphoryl and 3'-hydroxyl groups in double-stranded DNA using NAD as a coenzyme and as the energy source for the reaction. It is essential for DNA replication and repair of damaged DNA. The protein is DNA ligase of Coprothermobacter proteolyticus (strain ATCC 35245 / DSM 5265 / OCM 4 / BT).